The sequence spans 640 residues: Pro-neuregulin-1, membrane-bound isoform (640 aa).

The propeptide occupies Met-1–Gly-19. A disordered region spans residues Met-1–Leu-53. Residues Ser-20 to Arg-242 are Extracellular-facing. Residues Pro-37–Thr-128 form the Ig-like C2-type domain. Cys-57 and Cys-112 form a disulfide bridge. N-linked (GlcNAc...) asparagine glycans are attached at residues Asn-120, Asn-126, and Asn-164. The EGF-like domain maps to His-178–Thr-222. 3 cysteine pairs are disulfide-bonded: Cys-182/Cys-196, Cys-190/Cys-210, and Cys-212/Cys-221. The helical transmembrane segment at Val-243–Cys-265 threads the bilayer. Residues Lys-266–Val-640 are Cytoplasmic-facing. Residues Thr-334 to Thr-350 are compositionally biased toward low complexity. Disordered regions lie at residues Thr-334–Thr-360, Ser-375–Arg-399, Arg-433–Val-461, and Glu-524–Phe-588. The span at Pro-351–Thr-360 shows a compositional bias: polar residues. The span at Gly-387 to Gly-397 shows a compositional bias: gly residues. The segment covering Ala-542–Pro-552 has biased composition (basic residues). Low complexity predominate over residues Asp-563–Glu-574.

Belongs to the neuregulin family. As to quaternary structure, the cytoplasmic domain interacts with the LIM domain region of LIMK1. Forms a ternary complex with ERBB3 and ITGAV:ITGB3 or ITGA6:ITGB4. Interacts with NRDC and BACE1. Proteolytic cleavage close to the plasma membrane on the external face leads to the release of the soluble growth factor form. In terms of processing, N- and O-glycosylated. Extensive glycosylation precedes the proteolytic cleavage. As to expression, type I isoforms are the predominant forms expressed in the endocardium. Isoform alpha is expressed in breast, ovary, testis, prostate, heart, skeletal muscle, lung, placenta liver, kidney, salivary gland, small intestine and brain, but not in uterus, stomach, pancreas, and spleen. Isoform 3 is the predominant form in mesenchymal cells and in non-neuronal organs, whereas isoform 6 is the major neuronal form. Isoform 8 is expressed in spinal cord and brain. Isoform 9 is the major form in skeletal muscle cells; in the nervous system it is expressed in spinal cord and brain. Also detected in adult heart, placenta, lung, liver, kidney, and pancreas. Isoform 10 is expressed in nervous system: spinal cord motor neurons, dorsal root ganglion neurons, and brain. Predominant isoform expressed in sensory and motor neurons. Not detected in adult heart, placenta, lung, liver, skeletal muscle, kidney, and pancreas. Not expressed in fetal lung, liver and kidney. Type IV isoforms are brain-specific.

The protein localises to the cell membrane. The protein resides in the secreted. It is found in the nucleus. Its subcellular location is the membrane. Direct ligand for ERBB3 and ERBB4 tyrosine kinase receptors. Concomitantly recruits ERBB1 and ERBB2 coreceptors, resulting in ligand-stimulated tyrosine phosphorylation and activation of the ERBB receptors. The multiple isoforms perform diverse functions such as inducing growth and differentiation of epithelial, glial, neuronal, and skeletal muscle cells; inducing expression of acetylcholine receptor in synaptic vesicles during the formation of the neuromuscular junction; stimulating lobuloalveolar budding and milk production in the mammary gland and inducing differentiation of mammary tumor cells; stimulating Schwann cell proliferation; implication in the development of the myocardium such as trabeculation of the developing heart. Isoform 10 may play a role in motor and sensory neuron development. Binds to ERBB4. Binds to ERBB3. Acts as a ligand for integrins and binds (via EGF domain) to integrins ITGAV:ITGB3 or ITGA6:ITGB4. Its binding to integrins and subsequent ternary complex formation with integrins and ERRB3 are essential for NRG1-ERBB signaling. Induces the phosphorylation and activation of MAPK3/ERK1, MAPK1/ERK2 and AKT1. Ligand-dependent ERBB4 endocytosis is essential for the NRG1-mediated activation of these kinases in neurons. This Homo sapiens (Human) protein is Pro-neuregulin-1, membrane-bound isoform (NRG1).